Here is a 593-residue protein sequence, read N- to C-terminus: Cell surface glycoprotein (593 aa).

Positions 1–22 are cleaved as a signal peptide; that stretch reads MRKFTLLMLLLIVISMSGIAGA. Residues N29, N58, N66, N74, N114, N122, N145, N148, N158, N176, N208, N231, N326, N336, N340, N431, N471, N500, and N516 are each glycosylated (N-linked (GalNAc...) asparagine).

Post-translationally, N-glycosylated; contains glycans composed of methyl-Man, Man and GalNAc residues in a molar ratio of 2:3:1.

Its subcellular location is the secreted. The protein localises to the cell wall. It is found in the S-layer. Its function is as follows. The S-layer is a paracrystalline mono-layered assembly of proteins which coat the surface of the cell. The sequence is that of Cell surface glycoprotein (slgA) from Methanothermus fervidus (strain ATCC 43054 / DSM 2088 / JCM 10308 / V24 S).